The chain runs to 178 residues: MDRAARCSGASSLPLLLALALGLVILHCVVADGNSTRSPETNGLLCGDPEENCAATTTQSKRKGHFSRCPKQYKHYCIKGRCRFVVAEQTPSCVCDEGYIGARCERVDLFYLRGDRGQILVICLIAVMVVFIILVIGVCTCCHPLRKRRKRKKKEEEMETLGKDITPINEDIEETNIA.

The N-terminal stretch at 1–31 is a signal peptide; it reads MDRAARCSGASSLPLLLALALGLVILHCVVA. Topologically, residues 32–118 are extracellular; sequence DGNSTRSPET…LFYLRGDRGQ (87 aa). N34 carries an N-linked (GlcNAc...) asparagine glycan. The 41-residue stretch at 65 to 105 folds into the EGF-like domain; the sequence is HFSRCPKQYKHYCIKGRCRFVVAEQTPSCVCDEGYIGARCE. Intrachain disulfides connect C69/C82, C77/C93, and C95/C104. A propeptide spans 112-178 (removed in mature form); sequence LRGDRGQILV…NEDIEETNIA (67 aa). The helical transmembrane segment at 119–139 threads the bilayer; it reads ILVICLIAVMVVFIILVIGVC. At 140-178 the chain is on the cytoplasmic side; that stretch reads TCCHPLRKRRKRKKKEEEMETLGKDITPINEDIEETNIA.

As to quaternary structure, monomer. Interacts with EGFR and ERBB4. Synthesized in several tissues and tumor cells. Predominantly expressed in pancreas and small intestine.

Its subcellular location is the secreted. It is found in the extracellular space. The protein resides in the cell membrane. In terms of biological role, growth factor that binds to EGFR, ERBB4 and other EGF receptor family members. Potent mitogen for retinal pigment epithelial cells and vascular smooth muscle cells. This chain is Probetacellulin (BTC), found in Homo sapiens (Human).